The following is a 227-amino-acid chain: PKHD-type hydroxylase ABSDF3031 (227 aa).

In terms of domain architecture, Fe2OG dioxygenase spans 78–178 (KIIPPLFNRY…RFASFFWVQS (101 aa)). Fe cation contacts are provided by histidine 96, aspartate 98, and histidine 159. A 2-oxoglutarate-binding site is contributed by arginine 169.

Fe(2+) serves as cofactor. It depends on L-ascorbate as a cofactor.

The protein is PKHD-type hydroxylase ABSDF3031 of Acinetobacter baumannii (strain SDF).